Reading from the N-terminus, the 364-residue chain is tRNA 2-selenouridine synthase (364 aa).

Positions 14–137 (LIADTPIIDV…LRQTTIQATI (124 aa)) constitute a Rhodanese domain. Residue Cys-97 is the S-selanylcysteine intermediate of the active site.

Belongs to the SelU family. Monomer.

The catalysed reaction is 5-methylaminomethyl-2-thiouridine(34) in tRNA + selenophosphate + (2E)-geranyl diphosphate + H2O + H(+) = 5-methylaminomethyl-2-selenouridine(34) in tRNA + (2E)-thiogeraniol + phosphate + diphosphate. It carries out the reaction 5-methylaminomethyl-2-thiouridine(34) in tRNA + (2E)-geranyl diphosphate = 5-methylaminomethyl-S-(2E)-geranyl-thiouridine(34) in tRNA + diphosphate. It catalyses the reaction 5-methylaminomethyl-S-(2E)-geranyl-thiouridine(34) in tRNA + selenophosphate + H(+) = 5-methylaminomethyl-2-(Se-phospho)selenouridine(34) in tRNA + (2E)-thiogeraniol. The enzyme catalyses 5-methylaminomethyl-2-(Se-phospho)selenouridine(34) in tRNA + H2O = 5-methylaminomethyl-2-selenouridine(34) in tRNA + phosphate. Involved in the post-transcriptional modification of the uridine at the wobble position (U34) of tRNA(Lys), tRNA(Glu) and tRNA(Gln). Catalyzes the conversion of 2-thiouridine (S2U-RNA) to 2-selenouridine (Se2U-RNA). Acts in a two-step process involving geranylation of 2-thiouridine (S2U) to S-geranyl-2-thiouridine (geS2U) and subsequent selenation of the latter derivative to 2-selenouridine (Se2U) in the tRNA chain. In Escherichia coli O8 (strain IAI1), this protein is tRNA 2-selenouridine synthase.